A 217-amino-acid polypeptide reads, in one-letter code: GRB2-related adapter protein (217 aa).

Residues 1–58 (MESVALYSFQATESDELAFNKGDTLKILNMEDDQNWYKAELRGVEGFIPKNYIRVKPH) form the SH3 1 domain. The region spanning 60 to 154 (WYSGRISRQL…QIFLRDEEPL (95 aa)) is the SH2 domain. The SH3 2 domain maps to 158 to 217 (PGACFAQAQFDFSAQDPSQLSFRRGDIIEVLERPDPHWWRGRSCGRVGFFPRSYVQPVHL).

Belongs to the GRB2/sem-5/DRK family. In terms of assembly, associates through its SH2 domain with ligand-activated receptors for stem cell factor (KIT) and erythropoietin (EPOR). Also forms a stable complex with the Bcr-Abl oncoprotein. GRAP is associated with the Ras guanine nucleotide exchange factor SOS1, primarily through its N-terminal SH3 domain. Interacts with phosphorylated LAT upon TCR activation. Interacts with SHB.

Its subcellular location is the membrane. It localises to the synapse. Couples signals from receptor and cytoplasmic tyrosine kinases to the Ras signaling pathway. Plays a role in the inner ear and in hearing. This is GRB2-related adapter protein from Homo sapiens (Human).